A 72-amino-acid polypeptide reads, in one-letter code: Translation initiation factor IF-1 (72 aa).

Positions 1–72 (MAKEEAIEVE…TRGRIIFRER (72 aa)) constitute an S1-like domain.

It belongs to the IF-1 family. As to quaternary structure, component of the 30S ribosomal translation pre-initiation complex which assembles on the 30S ribosome in the order IF-2 and IF-3, IF-1 and N-formylmethionyl-tRNA(fMet); mRNA recruitment can occur at any time during PIC assembly.

It localises to the cytoplasm. Its function is as follows. One of the essential components for the initiation of protein synthesis. Stabilizes the binding of IF-2 and IF-3 on the 30S subunit to which N-formylmethionyl-tRNA(fMet) subsequently binds. Helps modulate mRNA selection, yielding the 30S pre-initiation complex (PIC). Upon addition of the 50S ribosomal subunit IF-1, IF-2 and IF-3 are released leaving the mature 70S translation initiation complex. This is Translation initiation factor IF-1 from Treponema denticola (strain ATCC 35405 / DSM 14222 / CIP 103919 / JCM 8153 / KCTC 15104).